The following is a 1340-amino-acid chain: MGAELSLLAPTAQPIALSVYVDFLSNIQYNKPLGTSRFLKTVKGLNDQGSIVVKVLVKPNSGLDLSEWVEKLEFLRLKLLDVPNVIPYNLVIDSVRAGYLIRPFQQRTLYERVSIQPYLEPIEKKWIAFQLIHAVMECHERGQYHGDIKSENVLLTSWDMVFLTDFAPFKPIYLPGNNPSQFSFYFDTSRRNVCYVAPERFLGEGTPTQYQEVDKLTSSMDIFSLGCTVAELFLEGSVLFTLPQLFKYKKGEYTPSLSGIVDNDLRNMIQEMIDLDPRKRISAHDCLRKHRGKVFPEYFYSFLYDYMLELSTPSDHSVGNWRFDECDRRIERIYNDMGMICDKLDVNLDLNIVHSFTEEPSQNVIPMTLRLPGVEPHIPQSSKTPYDSALIILNILLHSMRNTTHSSYRIKSCDLILMISEMLSDEQKLDRCLPYLVHLLNDPSIDVQAAALKYMTQLLLLVDYLTPVNVLIFPEYILPKLASFLSTTKGSYMRMIFATILPHLAKTALKFYEMAILLGSHVEKFELLKNFENLTIQLLIDPDSSAKISLLKNILPLASVFGKDKTNDIILSHMITYLNDPDENLRVAFIESILGLSIFVGITSLENYILPLLVQTLTDNSEIVVVNVLRSFAELNNLGLIKKRYKFDLIKVSSKLLLHPNSWIRLGTLRLLISVVKDLSLTDFYCLLYPLVRPFFEYEVTNFDWATLYPCIIKPIPRSIYTLSITWALKAEKTLFWQQVKLAKPDPFGSRNSTFLLNRNSKIGESGVVSNNQIPTSPEDIGWLGKLKASGFDEKDLWKIATLRDYIFRVARSRSNIPTQENNEVTMQQMGIYPRIVFFEKGSMYETEGFVTGSSMMANYRILVNSEYSPESLTKRKTVGGVNTNHTYSGANPYILKFLECIKFRHVLDDSEEFGPSIPSATVEEGHWKFEGVLVSHLTEHTGSITSLALSPDQQYFLTGDSKGIIRLWDVLQLERNGYATSHVTVSMSSSVKDIKFIENRNSFCAVTADGEIKIFRVEINSTSSSVRSNGSPHRHESISLLREHSLEGEHISDMKFIGPNLAVTTLSCKLILFDLRDMQIAEEIQNPVSHGFITSFDLDSSQSWLLIGTSKGILDFYDLRFELLVKSWKLKSTSYPIKHITVPPAGFTCNRKSERFALINGGTNDSVTIVFDVSKGQCSELYFTETVNLNTAIDNYEVLEVDNGEERTRTSVLATEVEDRSITSLTMLGSNQFLTATFDKRVILWDTGNKANSSALISKLDDFTSSFSSVQVRPHLMAINEKIVEKDPQDIGGPKRNMASANSSTFDLHSDIITGIAVIQKPLKMLILVDRAGVINIYK.

The N-myristoyl glycine moiety is linked to residue Gly-2. One can recognise a Protein kinase domain in the interval Ile-27–Leu-303. Residues Leu-33 to Thr-41 and Lys-54 each bind ATP. The Proton acceptor role is filled by Asp-147. 2 HEAT repeats span residues Cys-432 to Val-470 and Ile-570 to Tyr-608. WD repeat units lie at residues Glu-940–Tyr-979, Ser-987–Ser-1026, Val-1089–Ser-1128, Ser-1133–Leu-1182, Val-1218–Ala-1256, and Leu-1309–Lys-1340.

Belongs to the protein kinase superfamily. Ser/Thr protein kinase family.

Its subcellular location is the golgi apparatus. It localises to the trans-Golgi network membrane. The protein resides in the endosome membrane. The catalysed reaction is L-seryl-[protein] + ATP = O-phospho-L-seryl-[protein] + ADP + H(+). It catalyses the reaction L-threonyl-[protein] + ATP = O-phospho-L-threonyl-[protein] + ADP + H(+). Functionally, involved in glucose-induced micropexophagy and ethanol-induced macropexophagy. Required for ATG2 recruitment to a perivacuolar compartment. In Komagataella pastoris (Yeast), this protein is Putative serine/threonine-protein kinase VPS15 (VPS15).